A 347-amino-acid polypeptide reads, in one-letter code: Rhodopsin (347 aa).

Over 1 to 33 (TEGPDFYIPMVNTTGVVRSPYEYPQYYLVNPAA) the chain is Extracellular. N-linked (GlcNAc...) asparagine glycosylation is present at asparagine 12. A helical transmembrane segment spans residues 34-58 (FAVLGAYMFFLIIIGFPINFLTLYV). Residues 59-70 (TLEHKKLRTPLN) lie on the Cytoplasmic side of the membrane. A helical transmembrane segment spans residues 71–93 (YILLNLAVADLFMVIGGFTTTMY). Residues 94 to 107 (SSMHGYFVLGRLGC) lie on the Extracellular side of the membrane. An intrachain disulfide couples cysteine 107 to cysteine 184. The helical transmembrane segment at 108 to 130 (NIEGFFATLGGMISLWSLAVLAI) threads the bilayer. Positions 131-133 (ERW) match the 'Ionic lock' involved in activated form stabilization motif. Topologically, residues 131 to 149 (ERWVVVCKPISNFRFGENH) are cytoplasmic. Residues 150–170 (AIMGVSLTWVMALACTVPPLV) traverse the membrane as a helical segment. The Extracellular portion of the chain corresponds to 171–199 (GWSRYIPEGMQCACGIDYYTRAEGYNNES). Asparagine 197 is a glycosylation site (N-linked (GlcNAc...) asparagine). A helical transmembrane segment spans residues 200–221 (FVIYMFTFHFLFPMFIIFFCYG). At 222-249 (RLLCAVKEAAAAQQESETTQRAEREVTR) the chain is on the cytoplasmic side. Residues 250-271 (MVILMVIGYLVCWLPYASVAWF) form a helical membrane-spanning segment. The Extracellular portion of the chain corresponds to 272–283 (IFTHKGSEFGPL). Residues 284–305 (FMAVPSFFAKSSSIYNPIIYIC) form a helical membrane-spanning segment. At lysine 293 the chain carries N6-(retinylidene)lysine. The Cytoplasmic segment spans residues 306 to 347 (MNKQFRQCMITTLFCGKNPFEGQEEDSSTKTEASSASSVSPA). Residue cysteine 320 is the site of S-palmitoyl cysteine attachment. The disordered stretch occupies residues 326-347 (EGQEEDSSTKTEASSASSVSPA). Over residues 335 to 347 (KTEASSASSVSPA) the composition is skewed to low complexity.

This sequence belongs to the G-protein coupled receptor 1 family. Opsin subfamily. Phosphorylated on some or all of the serine and threonine residues present in the C-terminal region. Post-translationally, contains one covalently linked retinal chromophore.

The protein localises to the membrane. Its subcellular location is the cell projection. It is found in the cilium. The protein resides in the photoreceptor outer segment. Functionally, photoreceptor required for image-forming vision at low light intensity. While most salt water fish species use retinal as chromophore, most freshwater fish use 3-dehydroretinal, or a mixture of retinal and 3-dehydroretinal. Light-induced isomerization of 11-cis to all-trans retinal triggers a conformational change that activates signaling via G-proteins. Subsequent receptor phosphorylation mediates displacement of the bound G-protein alpha subunit by arrestin and terminates signaling. The chain is Rhodopsin (rho) from Sargocentron tiere (Blue lined squirrelfish).